Consider the following 713-residue polypeptide: Constitutive lysine decarboxylase (713 aa).

Lys-367 bears the N6-(pyridoxal phosphate)lysine mark.

It belongs to the Orn/Lys/Arg decarboxylase class-I family. Homodecamer; built of five dimers associated in a 5-fold symmetrical double-ring. The cofactor is pyridoxal 5'-phosphate.

It carries out the reaction L-lysine + H(+) = cadaverine + CO2. Its function is as follows. Plays a role in lysine utilization by acting as a lysine decarboxylase. This is Constitutive lysine decarboxylase (ldcC) from Escherichia coli (strain K12).